Reading from the N-terminus, the 111-residue chain is Heavy metal-associated isoprenylated plant protein 10 (111 aa).

Residues 1–68 (MQETVVFEWG…ICDYVDITAV (68 aa)) enclose the HMA domain. The interval 68–111 (VGPEGQPAQNRNPVKKPEPKVIRGRPYPPQKKTPGKNSDECIIL) is disordered. Cys108 carries the cysteine methyl ester modification. Cys108 carries the S-farnesyl cysteine lipid modification. The propeptide at 109-111 (IIL) is removed in mature form.

Belongs to the HIPP family.

In terms of biological role, probable heavy-metal-binding protein. The polypeptide is Heavy metal-associated isoprenylated plant protein 10 (Arabidopsis thaliana (Mouse-ear cress)).